Here is a 676-residue protein sequence, read N- to C-terminus: DNA ligase (676 aa).

Residues 35-39 (DAVYD), 84-85 (SL), and glutamate 115 each bind NAD(+). Lysine 117 serves as the catalytic N6-AMP-lysine intermediate. 4 residues coordinate NAD(+): arginine 138, glutamate 177, lysine 296, and lysine 320. The Zn(2+) site is built by cysteine 414, cysteine 417, cysteine 432, and cysteine 437. In terms of domain architecture, BRCT spans 599 to 676 (NANLKLVGKT…SEAELLKILA (78 aa)).

The protein belongs to the NAD-dependent DNA ligase family. LigA subfamily. It depends on Mg(2+) as a cofactor. Mn(2+) is required as a cofactor.

The enzyme catalyses NAD(+) + (deoxyribonucleotide)n-3'-hydroxyl + 5'-phospho-(deoxyribonucleotide)m = (deoxyribonucleotide)n+m + AMP + beta-nicotinamide D-nucleotide.. DNA ligase that catalyzes the formation of phosphodiester linkages between 5'-phosphoryl and 3'-hydroxyl groups in double-stranded DNA using NAD as a coenzyme and as the energy source for the reaction. It is essential for DNA replication and repair of damaged DNA. This is DNA ligase from Trichormus variabilis (strain ATCC 29413 / PCC 7937) (Anabaena variabilis).